The sequence spans 31 residues: Cytochrome b6-f complex subunit 6 (31 aa).

A helical membrane pass occupies residues 4 to 26 (ITSYFGFLLAASTITSALLIGLS).

The protein belongs to the PetL family. As to quaternary structure, the 4 large subunits of the cytochrome b6-f complex are cytochrome b6, subunit IV (17 kDa polypeptide, PetD), cytochrome f and the Rieske protein, while the 4 small subunits are PetG, PetL, PetM and PetN. The complex functions as a dimer.

The protein resides in the plastid. Its subcellular location is the chloroplast thylakoid membrane. Component of the cytochrome b6-f complex, which mediates electron transfer between photosystem II (PSII) and photosystem I (PSI), cyclic electron flow around PSI, and state transitions. PetL is important for photoautotrophic growth as well as for electron transfer efficiency and stability of the cytochrome b6-f complex. This Chloranthus spicatus (Chulantree) protein is Cytochrome b6-f complex subunit 6.